We begin with the raw amino-acid sequence, 131 residues long: Glycine cleavage system H protein (131 aa).

A Lipoyl-binding domain is found at 24–106 (TVRVGITDYA…YGEGWLVELQ (83 aa)). Residue K65 is modified to N6-lipoyllysine.

It belongs to the GcvH family. In terms of assembly, the glycine cleavage system is composed of four proteins: P, T, L and H. It depends on (R)-lipoate as a cofactor.

Its function is as follows. The glycine cleavage system catalyzes the degradation of glycine. The H protein shuttles the methylamine group of glycine from the P protein to the T protein. In Mycolicibacterium vanbaalenii (strain DSM 7251 / JCM 13017 / BCRC 16820 / KCTC 9966 / NRRL B-24157 / PYR-1) (Mycobacterium vanbaalenii), this protein is Glycine cleavage system H protein.